Reading from the N-terminus, the 160-residue chain is D-aminoacyl-tRNA deacylase (160 aa).

Residues 137-138 carry the Gly-cisPro motif, important for rejection of L-amino acids motif; it reads GP.

This sequence belongs to the DTD family. Homodimer.

The protein resides in the cytoplasm. It carries out the reaction glycyl-tRNA(Ala) + H2O = tRNA(Ala) + glycine + H(+). The catalysed reaction is a D-aminoacyl-tRNA + H2O = a tRNA + a D-alpha-amino acid + H(+). Functionally, an aminoacyl-tRNA editing enzyme that deacylates mischarged D-aminoacyl-tRNAs. Also deacylates mischarged glycyl-tRNA(Ala), protecting cells against glycine mischarging by AlaRS. Acts via tRNA-based rather than protein-based catalysis; rejects L-amino acids rather than detecting D-amino acids in the active site. By recycling D-aminoacyl-tRNA to D-amino acids and free tRNA molecules, this enzyme counteracts the toxicity associated with the formation of D-aminoacyl-tRNA entities in vivo and helps enforce protein L-homochirality. The chain is D-aminoacyl-tRNA deacylase from Chloroflexus aurantiacus (strain ATCC 29364 / DSM 637 / Y-400-fl).